We begin with the raw amino-acid sequence, 102 residues long: Small ribosomal subunit protein uS10 (102 aa).

This sequence belongs to the universal ribosomal protein uS10 family. Part of the 30S ribosomal subunit.

Its function is as follows. Involved in the binding of tRNA to the ribosomes. This is Small ribosomal subunit protein uS10 from Lacticaseibacillus casei (strain BL23) (Lactobacillus casei).